A 309-amino-acid polypeptide reads, in one-letter code: Aspartate carbamoyltransferase catalytic subunit (309 aa).

Positions 55 and 56 each coordinate carbamoyl phosphate. K85 is a binding site for L-aspartate. Carbamoyl phosphate-binding residues include R106, H135, and Q138. 2 residues coordinate L-aspartate: R168 and R230. Carbamoyl phosphate is bound by residues L268 and P269.

This sequence belongs to the aspartate/ornithine carbamoyltransferase superfamily. ATCase family. Heterododecamer (2C3:3R2) of six catalytic PyrB chains organized as two trimers (C3), and six regulatory PyrI chains organized as three dimers (R2).

It carries out the reaction carbamoyl phosphate + L-aspartate = N-carbamoyl-L-aspartate + phosphate + H(+). The protein operates within pyrimidine metabolism; UMP biosynthesis via de novo pathway; (S)-dihydroorotate from bicarbonate: step 2/3. Catalyzes the condensation of carbamoyl phosphate and aspartate to form carbamoyl aspartate and inorganic phosphate, the committed step in the de novo pyrimidine nucleotide biosynthesis pathway. The polypeptide is Aspartate carbamoyltransferase catalytic subunit (Vibrio cholerae serotype O1 (strain ATCC 39315 / El Tor Inaba N16961)).